A 140-amino-acid chain; its full sequence is Small ribosomal subunit protein uS8c (140 aa).

It belongs to the universal ribosomal protein uS8 family. As to quaternary structure, part of the 30S ribosomal subunit.

It is found in the plastid. The protein resides in the chloroplast. Its function is as follows. One of the primary rRNA binding proteins, it binds directly to 16S rRNA central domain where it helps coordinate assembly of the platform of the 30S subunit. The polypeptide is Small ribosomal subunit protein uS8c (rps8) (Euglena gracilis).